The following is a 734-amino-acid chain: Ribosomal RNA large subunit methyltransferase K/L (734 aa).

The 119-residue stretch at 49–167 (QAYRVCMWSR…KTEHTYCLDL (119 aa)) folds into the THUMP domain.

This sequence belongs to the methyltransferase superfamily. RlmKL family.

It is found in the cytoplasm. The enzyme catalyses guanosine(2445) in 23S rRNA + S-adenosyl-L-methionine = N(2)-methylguanosine(2445) in 23S rRNA + S-adenosyl-L-homocysteine + H(+). The catalysed reaction is guanosine(2069) in 23S rRNA + S-adenosyl-L-methionine = N(2)-methylguanosine(2069) in 23S rRNA + S-adenosyl-L-homocysteine + H(+). Its function is as follows. Specifically methylates the guanine in position 2445 (m2G2445) and the guanine in position 2069 (m7G2069) of 23S rRNA. This Acinetobacter baylyi (strain ATCC 33305 / BD413 / ADP1) protein is Ribosomal RNA large subunit methyltransferase K/L.